The primary structure comprises 733 residues: Catalase-peroxidase (733 aa).

The tryptophyl-tyrosyl-methioninium (Trp-Tyr) (with M-245) cross-link spans 96–219 (WHSAGTYRTG…LAAVQMGLIY (124 aa)). Catalysis depends on histidine 97, which acts as the Proton acceptor. Residues 219–245 (YVNPEGPNGNPDPLAAAKDIRETFARM) constitute a cross-link (tryptophyl-tyrosyl-methioninium (Tyr-Met) (with W-96)). Histidine 260 provides a ligand contact to heme b.

This sequence belongs to the peroxidase family. Peroxidase/catalase subfamily. As to quaternary structure, homodimer or homotetramer. Requires heme b as cofactor. Formation of the three residue Trp-Tyr-Met cross-link is important for the catalase, but not the peroxidase activity of the enzyme.

It carries out the reaction H2O2 + AH2 = A + 2 H2O. The catalysed reaction is 2 H2O2 = O2 + 2 H2O. In terms of biological role, bifunctional enzyme with both catalase and broad-spectrum peroxidase activity. This chain is Catalase-peroxidase, found in Geobacter sp. (strain M21).